The primary structure comprises 319 residues: Melanoma-associated antigen B2 (319 aa).

Residues 1 to 17 (MPRGQKSKLRAREKRRK) are compositionally biased toward basic residues. The disordered stretch occupies residues 1–112 (MPRGQKSKLR…TKSPSEDPLT (112 aa)). Composition is skewed to low complexity over residues 39–57 (PCCSSSVSGGAASSSPAAG), 67–79 (TTAAAAAAGVSST), and 94–105 (ASSSQASTSTKS). Serine 77 and serine 105 each carry phosphoserine. The MAGE domain maps to 111–310 (LTRKSGSLVQ…CAFPTHYEEA (200 aa)).

Interacts with TRIM28. In terms of tissue distribution, expressed in testis and placenta, and in a significant fraction of tumors of various histologic types.

Its function is as follows. May enhance ubiquitin ligase activity of RING-type zinc finger-containing E3 ubiquitin-protein ligases. Proposed to act through recruitment and/or stabilization of the Ubl-conjugating enzyme (E2) at the E3:substrate complex. This is Melanoma-associated antigen B2 (MAGEB2) from Homo sapiens (Human).